The following is a 277-amino-acid chain: NADPH-dependent 7-cyano-7-deazaguanine reductase (277 aa).

86-88 (IES) is a substrate binding site. 88–89 (SK) contacts NADPH. The active-site Thioimide intermediate is Cys-184. Catalysis depends on Asp-191, which acts as the Proton donor. 223–224 (HE) provides a ligand contact to substrate. 252–253 (RG) is an NADPH binding site.

Belongs to the GTP cyclohydrolase I family. QueF type 2 subfamily. In terms of assembly, homodimer.

The protein localises to the cytoplasm. The catalysed reaction is 7-aminomethyl-7-carbaguanine + 2 NADP(+) = 7-cyano-7-deazaguanine + 2 NADPH + 3 H(+). Its pathway is tRNA modification; tRNA-queuosine biosynthesis. Its function is as follows. Catalyzes the NADPH-dependent reduction of 7-cyano-7-deazaguanine (preQ0) to 7-aminomethyl-7-deazaguanine (preQ1). In Chromohalobacter salexigens (strain ATCC BAA-138 / DSM 3043 / CIP 106854 / NCIMB 13768 / 1H11), this protein is NADPH-dependent 7-cyano-7-deazaguanine reductase.